The primary structure comprises 859 residues: Volume-regulated anion channel subunit LRRC8D (859 aa).

Topologically, residues 1–22 (MFTLAEVASLNDIQPTYRILKP) are cytoplasmic. A helical membrane pass occupies residues 23–48 (WWDVFMDYLAVVMLMVAIFAGTMQLT). Over 49–164 (KDQVVCLPVL…YHLALPWYSK (116 aa)) the chain is Extracellular. A disulfide bridge links cysteine 54 with cysteine 355. The interval 110 to 138 (IPLQATHPHAESTLPNQEAKKEKRDPTGR) is disordered. A compositionally biased stretch (basic and acidic residues) spans 127–138 (EAKKEKRDPTGR). Residues 165–183 (YFPYLALIHTIILMVSSNF) traverse the membrane as a helical segment. Residues 184–309 (WFKYPKTCSK…EDSDLIYKLY (126 aa)) are Cytoplasmic-facing. The interval 222 to 252 (SEENKQRITGAQTLPKHVSTSSDEGSPSAST) is disordered. Residues 228-252 (RITGAQTLPKHVSTSSDEGSPSAST) are compositionally biased toward polar residues. Phosphoserine occurs at positions 242, 243, and 247. Residues 310–331 (VVQTLIKTAKFIFILCYTANFV) form a helical membrane-spanning segment. The Extracellular portion of the chain corresponds to 332–361 (NAISFEHVCKPKVEHLTGYEVFECTHNMAY). Residues 362–387 (MLKKLLISYISIICVYGFICLYTLFW) traverse the membrane as a helical segment. Residues 388 to 859 (LFRIPLKEYS…DVNVPFANGI (472 aa)) lie on the Cytoplasmic side of the membrane. 13 LRR repeats span residues 515–535 (NLQELHLCHCPAKVEQTAFSF), 539–560 (HLRCLHVKFTDVAEIPAWVYLL), 562–583 (NLRELYLIGNLNSENNKMIGLE), 590–610 (HLKILHVKSNLTKVPSNITDV), 613–633 (HLTKLVIHNDGTKLLVLNSLK), 637–658 (NVAELELQNCELERIPHAIFSL), 660–681 (NLQELDLKSNNIRTIEEIISFQ), 685–706 (RLTCLKLWHNKIVAIPPSITHV), 708–729 (NLESLYFSNNKLESLPTAVFSL), 731–752 (KLRCLDVSYNNISTIPIEIGLL), 754–775 (NLQHLHITGNKVDILPKQLFKC), 777–798 (KLRTLNLGQNCIASLPEKISQL), and 800–821 (QLTQLELKGNCLDRLPAQLGQC).

It belongs to the LRRC8 family. Heterohexamer; oligomerizes with other LRRC8 proteins (LRRC8A, LRRC8B, LRRC8C and/or LRRC8E) to form a heterohexamer. In vivo, the subunit composition may depend primarily on expression levels, and heterooligomeric channels containing various proportions of the different LRRC8 proteins may coexist. Expressed in pancreatic beta cells. Also expressed in glucagon-secreting pancreatic alpha cells.

The protein localises to the cell membrane. Its subcellular location is the endoplasmic reticulum membrane. It carries out the reaction chloride(in) = chloride(out). The enzyme catalyses iodide(out) = iodide(in). The catalysed reaction is taurine(out) = taurine(in). In terms of biological role, non-essential component of the volume-regulated anion channel (VRAC, also named VSOAC channel), an anion channel required to maintain a constant cell volume in response to extracellular or intracellular osmotic changes. The VRAC channel conducts iodide better than chloride and can also conduct organic osmolytes like taurine. Plays a redundant role in the efflux of amino acids, such as aspartate, in response to osmotic stress family member (LRRC8B, LRRC8C, LRRC8D or LRRC8E); channel characteristics depend on the precise subunit composition. Also acts as a regulator of glucose-sensing in pancreatic beta cells: VRAC currents, generated in response to hypotonicity- or glucose-induced beta cell swelling, depolarize cells, thereby causing electrical excitation, leading to increase glucose sensitivity and insulin secretion. VRAC channels containing LRRC8D inhibit transport of immunoreactive cyclic dinucleotide GMP-AMP (2'-3'-cGAMP), an immune messenger produced in response to DNA virus in the cytosol. This is Volume-regulated anion channel subunit LRRC8D from Mus musculus (Mouse).